A 55-amino-acid chain; its full sequence is Large ribosomal subunit protein bL33 (55 aa).

This sequence belongs to the bacterial ribosomal protein bL33 family.

This chain is Large ribosomal subunit protein bL33, found in Granulibacter bethesdensis (strain ATCC BAA-1260 / CGDNIH1).